Consider the following 356-residue polypeptide: L-Lys-D/L-Arg epimerase (356 aa).

Residues Thr135 and 160–162 (KVK) contribute to the substrate site. Positions 190, 216, and 241 each coordinate Mg(2+). Substrate is bound by residues Lys266, Asp296, and 319–321 (DLD).

This sequence belongs to the mandelate racemase/muconate lactonizing enzyme family. Mg(2+) is required as a cofactor.

Catalyzes the epimerization of L-Lys-L-Arg to L-Lys-D-Arg. Can also catalyze the epimerization of other cationic dipeptides, such as L-Arg-L-Arg, L-Lys-L-Lys and L-Lys-L-His, but with lower efficiency (in vitro). This is L-Lys-D/L-Arg epimerase from Methylococcus capsulatus (strain ATCC 33009 / NCIMB 11132 / Bath).